The sequence spans 85 residues: ATP synthase subunit c (85 aa).

A run of 2 helical transmembrane segments spans residues 10–30 (IAVA…FAIL) and 53–73 (FIVA…ALFF).

This sequence belongs to the ATPase C chain family. As to quaternary structure, F-type ATPases have 2 components, F(1) - the catalytic core - and F(0) - the membrane proton channel. F(1) has five subunits: alpha(3), beta(3), gamma(1), delta(1), epsilon(1). F(0) has three main subunits: a(1), b(2) and c(10-14). The alpha and beta chains form an alternating ring which encloses part of the gamma chain. F(1) is attached to F(0) by a central stalk formed by the gamma and epsilon chains, while a peripheral stalk is formed by the delta and b chains.

It localises to the cell inner membrane. Functionally, f(1)F(0) ATP synthase produces ATP from ADP in the presence of a proton or sodium gradient. F-type ATPases consist of two structural domains, F(1) containing the extramembraneous catalytic core and F(0) containing the membrane proton channel, linked together by a central stalk and a peripheral stalk. During catalysis, ATP synthesis in the catalytic domain of F(1) is coupled via a rotary mechanism of the central stalk subunits to proton translocation. Its function is as follows. Key component of the F(0) channel; it plays a direct role in translocation across the membrane. A homomeric c-ring of between 10-14 subunits forms the central stalk rotor element with the F(1) delta and epsilon subunits. The chain is ATP synthase subunit c from Shewanella halifaxensis (strain HAW-EB4).